A 915-amino-acid polypeptide reads, in one-letter code: MPRGSRARGSKRKRSWNTECPSFPGERPLQVRRAGLRTAGAAASLSEAWLRCGEGFQNTSGNPSLTAEEKTITEKHLELCPRPKQETTTSKSTSGLTDITWSSSGSDLSDEDKTLSQLQRDELQFIDWEIDSDRAEASDCDEFEDDEGAVEISDCASCASNQSLTSDEKLSELPKPSSIEILEYSSDSEKEDDLENVLLIDSESPHKYHVQFASDARQIMERLIDPRTKSTETILHTPQKPTAKFPRTPENSAKKKLLRGGLAERLNGLQNRERSAISLWRHQCISYQKTLSGRKSGVLTVKILELHEECAMQVAMCEQLLGSPATSSSQSVAPRPGAGLKVLFTKETAGYLRGRPQDTVRIFPPWQKLIIPSGSCPVILNTYFCEKVVAKEDSEKTCEVYCPDIPLPRRSISLAQMFVIKGLTNNSPEIQVVCSGVATTGTAWTHGHKEAKQRIPTSTPLRDSLLDVVESQGAASWPGAGVRVVVQRVYSLPSRDSTRGQQGASSGHTDPAGTRACLLVQDACGMFGEVHLEFTMSKARQLEGKSCSLVGMKVLQKVTRGRTAGIFSLIDTLWPPAIPLKTPGRDQPCEEIKTHLPPPALCYILTAHPNLGQIDIIDEDPIYKLYQPPVTRCLRDILQMNDLGTRCSFYATVIYQKPQLKSLLLLEQREIWLLVTDVTLQTKEERDPRLPKTLLVYVAPLCVLGSEVLEALAGAAPHSLFFKDALRDQGRIVCAERTVLLLQKPLLSVVSGASSCELPGPVMLDSLDSATPVNSICSVQGTVVGVDESTAFSWPVCDMCGNGRLEQRPEDRGAFSCGDCSRVVTSPVLKRHLQVFLDCRSRPQCRVKVKLLQRSISSLLRFAAGEDGSYEVKSVLGKEVGLLNCFVQSVTAHPTSCIGLEEIELLSAGGASAEH.

Positions 1-15 (MPRGSRARGSKRKRS) are enriched in basic residues. 2 disordered regions span residues 1-30 (MPRG…RPLQ) and 56-114 (FQNT…EDKT). The span at 56–65 (FQNTSGNPSL) shows a compositional bias: polar residues. Over residues 67-85 (AEEKTITEKHLELCPRPKQ) the composition is skewed to basic and acidic residues. Positions 86–107 (ETTTSKSTSGLTDITWSSSGSD) are enriched in polar residues. Positions 151-450 (EISDCASCAS…GTAWTHGHKE (300 aa)) are necessary for interaction with RAD51.

In terms of assembly, found in a complex, at least composed of BLM, RAD51 and SPIDR; the complex formation is mediated by SPIDR. Interacts (via C-terminal region) with BLM; the interaction is direct. Interacts with RAD51; the interaction is direct. Interacts (via the C-terminal region) with FIGNL1 (via N-terminal one-half region); the interaction is direct.

It is found in the nucleus. Functionally, plays a role in DNA double-strand break (DBS) repair via homologous recombination (HR). Serves as a scaffolding protein that helps to promote the recruitment of DNA-processing enzymes like the helicase BLM and recombinase RAD51 to site of DNA damage, and hence contributes to maintain genomic integrity. The chain is DNA repair-scaffolding protein (SPIDR) from Homo sapiens (Human).